The chain runs to 67 residues: uncharacterized protein (67 aa).

This is an uncharacterized protein from Bacillus subtilis (strain 168).